The sequence spans 247 residues: MNITPCSIKTLKGLYDISGVEVGQHFYWQIGGFQIHAQVLITSWVVITILLGSVIIAVRNPQTIPTDGQNFFEYVLEFIRDLSKTQIGEEYGPWVPFIGTMFLFIFVSNWSGALLPWKIIELPHGELAAPTNDINTTVALALLTSAAYFYAGLSKKGLSYFEKYIKPTPILLPINILEDFTKPLSLSFRLFGNILADELVVVVLVSLVPLVVPIPVMFLGLFTSGIQALIFATLAAAYIGESMEGHH.

Transmembrane regions (helical) follow at residues 38–58 (QVLITSWVVITILLGSVIIAV), 95–115 (VPFIGTMFLFIFVSNWSGALL), 134–154 (INTTVALALLTSAAYFYAGLS), 199–219 (LVVVVLVSLVPLVVPIPVMFL), and 220–240 (GLFTSGIQALIFATLAAAYIG).

Belongs to the ATPase A chain family. In terms of assembly, F-type ATPases have 2 components, CF(1) - the catalytic core - and CF(0) - the membrane proton channel. CF(1) has five subunits: alpha(3), beta(3), gamma(1), delta(1), epsilon(1). CF(0) has four main subunits: a, b, b' and c.

The protein localises to the plastid. The protein resides in the chloroplast thylakoid membrane. In terms of biological role, key component of the proton channel; it plays a direct role in the translocation of protons across the membrane. The polypeptide is ATP synthase subunit a, chloroplastic (Zea mays (Maize)).